The sequence spans 224 residues: Putative adhesin A1C_06425 (224 aa).

Residues Met1–Ala22 form the signal peptide.

This is Putative adhesin A1C_06425 from Rickettsia akari (strain Hartford).